A 365-amino-acid chain; its full sequence is Probable G-protein coupled receptor 142 (365 aa).

The Extracellular portion of the chain corresponds to 1–66 (MHLNSNPNSY…WPESPERSPC (66 aa)). Residue Asn-44 is glycosylated (N-linked (GlcNAc...) asparagine). The chain crosses the membrane as a helical span at residues 67-87 (VAGIIPVIYYSVLLSLGLPVA). Topologically, residues 88–102 (LARLAARTRKPSYHY) are cytoplasmic. The helical transmembrane segment at 103–123 (LLALTASDIVTQVIIVFVGFL) threads the bilayer. The Extracellular portion of the chain corresponds to 124-140 (LQGAVLARQVPQAVVRT). A helical membrane pass occupies residues 141–161 (ANILEFAANHASVWIAVLFTV). At 162–185 (DRYNALCRPLRHRATSSPGRTHRA) the chain is on the cytoplasmic side. Residues 186 to 206 (IAAVIGVTLLTGIPFYWWLDV) traverse the membrane as a helical segment. Residues 207-224 (WRDADPPSTMDKLLKWAH) lie on the Extracellular side of the membrane. A helical membrane pass occupies residues 225-245 (CLIVYFIPCNVFLVTNSAIIL). Over 246 to 264 (RLRKRGQRGLRPLVSKSTA) the chain is Cytoplasmic. The chain crosses the membrane as a helical span at residues 265–285 (ILLGVTSLFALLWAPRIIVML). At 286–304 (YHLYVAPVHRDWRVHLALD) the chain is on the extracellular side. The helical transmembrane segment at 305–325 (IANMLAMLNTEVNFGLYCFIS) threads the bilayer. At 326-365 (KTFRATVRQVICDVHMACALKSQPKQTVVELMLKSVGTEL) the chain is on the cytoplasmic side.

The protein belongs to the G-protein coupled receptor 1 family.

The protein localises to the cell membrane. Orphan receptor. In Mus musculus (Mouse), this protein is Probable G-protein coupled receptor 142 (Gpr142).